Reading from the N-terminus, the 350-residue chain is Dihydroorotase (350 aa).

Zn(2+) contacts are provided by His17 and His19. Residues 19–21 (HFR) and Asn45 contribute to the substrate site. Residues Lys103, His140, and His178 each contribute to the Zn(2+) site. The residue at position 103 (Lys103) is an N6-carboxylysine. His140 provides a ligand contact to substrate. Position 223 (Leu223) interacts with substrate. Asp251 lines the Zn(2+) pocket. Asp251 is a catalytic residue. His255 and Ala267 together coordinate substrate.

Belongs to the metallo-dependent hydrolases superfamily. DHOase family. Class II DHOase subfamily. Homodimer. Zn(2+) serves as cofactor.

The catalysed reaction is (S)-dihydroorotate + H2O = N-carbamoyl-L-aspartate + H(+). The protein operates within pyrimidine metabolism; UMP biosynthesis via de novo pathway; (S)-dihydroorotate from bicarbonate: step 3/3. In terms of biological role, catalyzes the reversible cyclization of carbamoyl aspartate to dihydroorotate. This chain is Dihydroorotase, found in Photorhabdus laumondii subsp. laumondii (strain DSM 15139 / CIP 105565 / TT01) (Photorhabdus luminescens subsp. laumondii).